A 154-amino-acid polypeptide reads, in one-letter code: ORF3b protein (154 aa).

Residues Leu-80–Lys-138 form a mitochondrial targeting signal region. The segment at Cys-134–Arg-154 is nucleolar targeting. The Bipartite nuclear localization signal signature appears at Lys-135–Val-153.

In terms of assembly, interacts with host RUNX1 isoform b.

It localises to the host nucleus. The protein resides in the host nucleolus. The protein localises to the host mitochondrion. Its function is as follows. Induces host cell G0/G1 arrest and apoptosis. This is ORF3b protein from Homo sapiens (Human).